An 82-amino-acid polypeptide reads, in one-letter code: Precursor of CEP3 (82 aa).

The signal sequence occupies residues 1 to 24 (MATINVYVFAFIFLLTISVGSIEG). Residues 25–63 (RKLTKFTVTTSEEIRAGGSVLSSSPPTEPLESPPSHGVD) constitute a propeptide that is removed on maturation. Residues 40–82 (AGGSVLSSSPPTEPLESPPSHGVDTFRPTEPGHSPGIGHSVHN) form a disordered region. Residues P67, P70, and P74 each carry the hydroxyproline modification. Residues 79–82 (SVHN) constitute a propeptide that is removed on maturation.

The protein belongs to the C-terminally encoded plant signaling peptide (CEP) family. Interacts with the CEP receptor CEPR1. Post-translationally, the mature small signaling peptide is generated by proteolytic processing of the longer precursor. In terms of tissue distribution, mostly expressed in roots. Present in lateral roots (especially in vasculature), root-hypocotyl junction and cotyledons.

It is found in the secreted. Its subcellular location is the extracellular space. It localises to the apoplast. Functionally, extracellular signaling peptide that represses primary root growth rate and significantly inhibits lateral root formation. Promotes shoot growth. Modulates leaf morphology. Regulates systemic nitrogen (N)-demand signaling. Mediates systemic up-regulation of genes involved in N uptake and assimilation pathways. The sequence is that of Precursor of CEP3 from Arabidopsis thaliana (Mouse-ear cress).